The sequence spans 358 residues: ATP synthase gamma chain, chloroplastic (358 aa).

Residues 1 to 35 (MAAMLASKQGAFMGRSSFAPAPKGVASRGSLQVVA) constitute a chloroplast transit peptide. The active site involves Cys123. Cys233 and Cys239 are joined by a disulfide.

The protein belongs to the ATPase gamma chain family. F-type ATPases have 2 components, F(1) - the catalytic core - and F(0) - the membrane proton channel. F(1) has five subunits: alpha(3), beta(3), gamma(1), delta(1), epsilon(1). F(0) has four main subunits: a(1), b(1), b'(1) and c(10-14). The alpha and beta chains form an alternating ring which encloses part of the gamma chain. F(1) is attached to F(0) by a central stalk formed by the gamma and epsilon chains, while a peripheral stalk is formed by the delta, b and b' chains.

It is found in the plastid. The protein localises to the chloroplast thylakoid membrane. F(1)F(0) ATP synthase produces ATP from ADP in the presence of a proton or sodium gradient. F-type ATPases consist of two structural domains, F(1) containing the extramembraneous catalytic core and F(0) containing the membrane proton channel, linked together by a central stalk and a peripheral stalk. During catalysis, ATP synthesis in the catalytic domain of F(1) is coupled via a rotary mechanism of the central stalk subunits to proton translocation. In terms of biological role, produces ATP from ADP in the presence of a proton gradient across the membrane. The gamma chain is believed to be important in regulating ATPase activity and the flow of protons through the CF(0) complex. This is ATP synthase gamma chain, chloroplastic from Chlamydomonas reinhardtii (Chlamydomonas smithii).